An 85-amino-acid chain; its full sequence is Protein WIR1B (85 aa).

At 1–12 (MASHSAAGRRPT) the chain is on the cytoplasmic side. Residues 13 to 34 (ALVHIALFVAIAAVIINSSVCL) form a helical membrane-spanning segment. Residues 35–85 (GAAVHDAATSGTGALDPNVPAVPTPGGAGQPYTGRGCRTVYGCKPPAGSQP) lie on the Extracellular side of the membrane.

It is found in the membrane. Functionally, associated with pathogen defense. This is Protein WIR1B (WIR1B) from Triticum aestivum (Wheat).